Consider the following 384-residue polypeptide: Queuine tRNA-ribosyltransferase (384 aa).

The active-site Proton acceptor is Asp92. Residues 92 to 96 (DSGGF), Asp146, Gln190, and Gly217 each bind substrate. Positions 248-254 (GVGRPED) are RNA binding. The active-site Nucleophile is the Asp267. The interval 272-276 (TRHAR) is RNA binding; important for wobble base 34 recognition. 4 residues coordinate Zn(2+): Cys305, Cys307, Cys310, and His337.

Belongs to the queuine tRNA-ribosyltransferase family. As to quaternary structure, homodimer. Within each dimer, one monomer is responsible for RNA recognition and catalysis, while the other monomer binds to the replacement base PreQ1. It depends on Zn(2+) as a cofactor.

It carries out the reaction 7-aminomethyl-7-carbaguanine + guanosine(34) in tRNA = 7-aminomethyl-7-carbaguanosine(34) in tRNA + guanine. The protein operates within tRNA modification; tRNA-queuosine biosynthesis. Catalyzes the base-exchange of a guanine (G) residue with the queuine precursor 7-aminomethyl-7-deazaguanine (PreQ1) at position 34 (anticodon wobble position) in tRNAs with GU(N) anticodons (tRNA-Asp, -Asn, -His and -Tyr). Catalysis occurs through a double-displacement mechanism. The nucleophile active site attacks the C1' of nucleotide 34 to detach the guanine base from the RNA, forming a covalent enzyme-RNA intermediate. The proton acceptor active site deprotonates the incoming PreQ1, allowing a nucleophilic attack on the C1' of the ribose to form the product. After dissociation, two additional enzymatic reactions on the tRNA convert PreQ1 to queuine (Q), resulting in the hypermodified nucleoside queuosine (7-(((4,5-cis-dihydroxy-2-cyclopenten-1-yl)amino)methyl)-7-deazaguanosine). The polypeptide is Queuine tRNA-ribosyltransferase (Xylella fastidiosa (strain 9a5c)).